We begin with the raw amino-acid sequence, 493 residues long: Chaperone SurA (493 aa).

Positions 1 to 33 (MKRQAFSLLSRLNPWQQLLLSAVLVTLAAPAAA) are cleaved as a signal peptide. Residues 46 to 76 (FTQQGSQSASQGSTVAPSQPMMGVPQPSSQP) form a disordered region. A compositionally biased stretch (low complexity) spans 48-58 (QQGSQSASQGS). 2 consecutive PpiC domains span residues 230–332 (PTEF…KLVS) and 346–444 (IAQT…QVEN).

It is found in the periplasm. The catalysed reaction is [protein]-peptidylproline (omega=180) = [protein]-peptidylproline (omega=0). Chaperone involved in the correct folding and assembly of outer membrane proteins. Recognizes specific patterns of aromatic residues and the orientation of their side chains, which are found more frequently in integral outer membrane proteins. May act in both early periplasmic and late outer membrane-associated steps of protein maturation. The polypeptide is Chaperone SurA (Cupriavidus metallidurans (strain ATCC 43123 / DSM 2839 / NBRC 102507 / CH34) (Ralstonia metallidurans)).